Here is a 1004-residue protein sequence, read N- to C-terminus: Glutamate [NMDA] receptor subunit 1 (1004 aa).

Residues 1–39 (MAGTDSPAAARFVYRCLLFAPAIVVGLLLPLTLPPIAAA) form the signal peptide. Residues 40–585 (QRHTASDNPS…TLVSFLQPFS (546 aa)) are Extracellular-facing. Residues asparagine 270, asparagine 326, asparagine 357, asparagine 409, asparagine 466, asparagine 493, and asparagine 513 are each glycosylated (N-linked (GlcNAc...) asparagine). Residues 542 to 544 (PLT) and arginine 549 each bind glycine. Residues 586–606 (NTLWILVMVSVHVVALVLYLL) form a helical membrane-spanning segment. At 607–663 (DRFSPFGRFKLSHSDSNEEKALNLSSAVWFAWGVLLNSGIGEGTPRSFSARVLGMVW) the chain is on the cytoplasmic side. The helical transmembrane segment at 664-684 (AGFAMIIVASYTANLAAFLVL) threads the bilayer. Over 685–843 (ERPKTKLSGI…KTPNTLGLKN (159 aa)) the chain is Extracellular. N-linked (GlcNAc...) asparagine glycosylation occurs at asparagine 705. Positions 715 and 759 each coordinate glycine. A helical membrane pass occupies residues 844–864 (MAGVFILVGVGIAGGVGLIII). Residues 865-1004 (EVIYKKHQVK…YTSDVSHLVV (140 aa)) lie on the Cytoplasmic side of the membrane. The disordered stretch occupies residues 980–1004 (TRPQQNILPPRYSPGYTSDVSHLVV). The span at 994–1004 (GYTSDVSHLVV) shows a compositional bias: polar residues.

It belongs to the glutamate-gated ion channel (TC 1.A.10.1) family. As to quaternary structure, forms a heteromeric NMDA channel with Nmdar2.

It localises to the cell membrane. The protein resides in the postsynaptic cell membrane. The protein localises to the postsynaptic density. Functionally, NMDA receptor subtype of glutamate-gated ion channels with high calcium permeability and voltage-dependent sensitivity to magnesium. Mediated by glycine. This protein plays a key role in synaptic plasticity, synaptogenesis, excitotoxicity, memory acquisition and learning. It mediates neuronal functions in glutamate neurotransmission. Is involved in the cell surface targeting of NMDA receptors. Plays a role in associative learning and in long-term memory consolidation. This chain is Glutamate [NMDA] receptor subunit 1, found in Drosophila pseudoobscura pseudoobscura (Fruit fly).